The following is a 309-amino-acid chain: Sulfate adenylyltransferase subunit 2 (309 aa).

It belongs to the PAPS reductase family. CysD subfamily. Heterodimer composed of CysD, the smaller subunit, and CysN.

It catalyses the reaction sulfate + ATP + H(+) = adenosine 5'-phosphosulfate + diphosphate. The protein operates within sulfur metabolism; hydrogen sulfide biosynthesis; sulfite from sulfate: step 1/3. Its function is as follows. With CysN forms the ATP sulfurylase (ATPS) that catalyzes the adenylation of sulfate producing adenosine 5'-phosphosulfate (APS) and diphosphate, the first enzymatic step in sulfur assimilation pathway. APS synthesis involves the formation of a high-energy phosphoric-sulfuric acid anhydride bond driven by GTP hydrolysis by CysN coupled to ATP hydrolysis by CysD. This chain is Sulfate adenylyltransferase subunit 2, found in Methylorubrum populi (strain ATCC BAA-705 / NCIMB 13946 / BJ001) (Methylobacterium populi).